We begin with the raw amino-acid sequence, 459 residues long: MRTIIRQLLSQGVSGQTYAIAGWVRSLRISKGIAFIALNDGSNLAGIQVVVEEQSPAFSEIDAIATGCSLRVTGTLVASPAAGQERELRAESIAIVGTSDENYPLQKKRHSFEYLREIAHLRPRSNTFGAVFRLRSRLAQAIHRFFGDNNFLYVHTPIITASDCEGAGELFRVTTLDAASPPLLEGRPDFGQDFFGQKTGLTVSGQLEGELFALAFSDIYTFGPTFRAENSNTPRHAAEFWMIEPEMAFADLADDAALAEKFVRYLCRFALEECAEEMAFFDRQIEKGLLERVRRVAEADFVRMEYDEAIQRLQRSGVTFSYPVEWGLDLQTEHERYITEKIVGGPAFILNYPRDIKAFYMRSNPDNRTVAAMDLLVPKVGEIIGGSQREERLDVLEARMAELGIAREPLWWYLESRRWGSCPHAGFGLGFERLVMYLSGMENIRDVIPFPRTPRHAEF.

The protein belongs to the class-II aminoacyl-tRNA synthetase family. In terms of assembly, homodimer.

The protein resides in the cytoplasm. It carries out the reaction tRNA(Asn) + L-asparagine + ATP = L-asparaginyl-tRNA(Asn) + AMP + diphosphate + H(+). The polypeptide is Asparagine--tRNA ligase (Pelobacter propionicus (strain DSM 2379 / NBRC 103807 / OttBd1)).